A 241-amino-acid polypeptide reads, in one-letter code: ATP synthase subunit a (241 aa).

A run of 5 helical transmembrane segments spans residues 30-50 (GQVF…VVIG), 91-111 (FIGT…LVPW), 128-148 (INTT…AGLS), 193-213 (LVVA…VMFL), and 214-234 (GLFT…YYIG).

This sequence belongs to the ATPase A chain family. In terms of assembly, F-type ATPases have 2 components, CF(1) - the catalytic core - and CF(0) - the membrane proton channel. CF(1) has five subunits: alpha(3), beta(3), gamma(1), delta(1), epsilon(1). CF(0) has four main subunits: a, b, b' and c.

It localises to the cellular thylakoid membrane. Key component of the proton channel; it plays a direct role in the translocation of protons across the membrane. This chain is ATP synthase subunit a, found in Prochlorococcus marinus (strain NATL1A).